A 678-amino-acid polypeptide reads, in one-letter code: Methionine--tRNA ligase (678 aa).

Positions 12 to 22 match the 'HIGH' region motif; the sequence is PYANGPIHLGH. Positions 143, 146, 156, and 159 each coordinate Zn(2+). The short motif at 328–332 is the 'KMSKS' region element; sequence KMSKS. Lys331 contributes to the ATP binding site. The region spanning 577–678 is the tRNA-binding domain; sequence DFSKVDLRIA…SGAQPGMRVK (102 aa).

Belongs to the class-I aminoacyl-tRNA synthetase family. MetG type 1 subfamily. As to quaternary structure, homodimer. Requires Zn(2+) as cofactor.

The protein resides in the cytoplasm. The catalysed reaction is tRNA(Met) + L-methionine + ATP = L-methionyl-tRNA(Met) + AMP + diphosphate. In terms of biological role, is required not only for elongation of protein synthesis but also for the initiation of all mRNA translation through initiator tRNA(fMet) aminoacylation. The protein is Methionine--tRNA ligase of Acidithiobacillus ferrooxidans (strain ATCC 23270 / DSM 14882 / CIP 104768 / NCIMB 8455) (Ferrobacillus ferrooxidans (strain ATCC 23270)).